We begin with the raw amino-acid sequence, 4543 residues long: Low-density lipoprotein receptor-related protein 1 (4543 aa).

A signal peptide spans 1-21 (MGPLLALAGCLLALLAAPAAR). Over 22–4419 (ALEAPKTCSP…EFIVGEQQSG (4398 aa)) the chain is Extracellular. 2 LDL-receptor class A domains span residues 27 to 68 (KTCS…ICPQ) and 72 to 112 (SRCQ…HCRE). 6 disulfides stabilise this stretch: C29–C42, C36–C55, C49–C66, C74–C87, C81–C100, and C94–C110. Residues 113-151 (QLANCTALGCQHHCVPTLSGPACYCNNSFQLAEDRRSCK) form the EGF-like 1 domain. An N-linked (GlcNAc...) asparagine glycan is attached at N116. 6 disulfides stabilise this stretch: C117–C126, C122–C135, C137–C150, C156–C166, C162–C175, and C177–C190. The N-linked (GlcNAc...) asparagine glycan is linked to N138. Positions 152-191 (DFDECTVYGTCSQTCTNTEGSYTCSCVEGYLLQPDNRSCK) constitute an EGF-like 2; calcium-binding domain. N-linked (GlcNAc...) asparagine glycans are attached at residues N187 and N276. LDL-receptor class B repeat units lie at residues 294–336 (GNFY…DPAM), 337–380 (GKVF…DLVS), and 381–424 (RLVY…FENY). Residue N359 is glycosylated (N-linked (GlcNAc...) asparagine). N448 is a glycosylation site (N-linked (GlcNAc...) asparagine). Residues 476-522 (RSHACEPDQFGKPGGCSDICLLGNSHKSRTCRCRSGFSLGSDGKSCK) form the EGF-like 3 domain. 3 disulfides stabilise this stretch: C480/C495, C491/C506, and C508/C521. 4 LDL-receptor class B repeats span residues 573–615 (GFIY…DWMG), 616–661 (NNLY…DPLN), 662–712 (GWMY…DIPA), and 713–756 (KILY…YSSF). A glycan (N-linked (GlcNAc...) asparagine) is linked at N731. In terms of domain architecture, EGF-like 4 spans 801–841 (GSNKCRVNNGGCSSLCLATPRGRQCACAEDQILGADSVTCE). 33 cysteine pairs are disulfide-bonded: C805–C816, C812–C825, C827–C840, C852–C864, C859–C877, C871–C888, C893–C905, C900–C918, C912–C929, C934–C946, C941–C959, C953–C969, C974–C987, C982–C1000, C994–C1009, C1013–C1025, C1020–C1038, C1032–C1049, C1060–C1073, C1067–C1086, C1080–C1095, C1102–C1116, C1110–C1129, C1123–C1138, C1143–C1157, C1150–C1170, C1164–C1180, C1183–C1194, C1190–C1204, C1206–C1219, C1225–C1235, C1231–C1244, and C1246–C1259. 8 consecutive LDL-receptor class A domains span residues 850 to 890 (PQCQ…LCHQ), 891 to 931 (HTCP…TCSA), 932 to 971 (RTCSPNQFSCASGRCIPISWTCDLDDDCGDRSDESASCAY), 972 to 1011 (PTCFPLTQFTCNNGRCININWRCDNDNDCGDNSDEAGCSH), 1011 to 1051 (HSCS…NCTN), 1058 to 1097 (GGCHTDEFQCRLDGLCIPMRWRCDGDTDCMDSSDEKNCEG), 1100 to 1140 (HVCD…NCES), and 1141 to 1180 (LVCKPPSHTCANNTSICLPPEKLCDGSDDCGDGSDEGELC). Ca(2+) contacts are provided by W869, D872, D874, D876, D882, and E883. N926 is a glycosylation site (N-linked (GlcNAc...) asparagine). Residues W1030, D1033, D1035, D1037, D1043, and E1044 each contribute to the Ca(2+) site. A glycan (N-linked (GlcNAc...) asparagine) is linked at N1048. 6 residues coordinate Ca(2+): W1078, D1081, D1083, D1085, D1091, and E1092. 2 N-linked (GlcNAc...) asparagine glycosylation sites follow: N1152 and N1153. EGF-like domains follow at residues 1181–1220 (DQCSLNNGGCSHNCTVAPGEGIVCSCPLGMELGADNKTCQ) and 1221–1260 (IQSYCAKHLKCSQKCEQDKYNVKCSCYEGWMLEPDGESCR). N-linked (GlcNAc...) asparagine glycosylation is found at N1193 and N1216. N1305 is a glycosylation site (N-linked (GlcNAc...) asparagine). 5 LDL-receptor class B repeats span residues 1307-1353 (SSLY…DWIA), 1354-1396 (GNIY…DPRY), 1397-1443 (GILF…DYLE), 1444-1488 (KRIL…YGGE), and 1489-1529 (VYWT…YHPS). A glycan (N-linked (GlcNAc...) asparagine) is linked at N1509. One can recognise an EGF-like 7 domain in the interval 1534-1577 (APNPCEANGGKGPCSHLCLINYNRTLSCACPHLMKLDKDNTTCY). 3 cysteine pairs are disulfide-bonded: C1538/C1551, C1547/C1561, and C1563/C1576. Residues N1556, N1573, N1614, and N1643 are each glycosylated (N-linked (GlcNAc...) asparagine). 4 LDL-receptor class B repeats span residues 1625–1667 (QRIY…DWVS), 1668–1711 (RNLF…HPLH), 1712–1751 (GKLYWTDGDNISVANMDGSNRTLLFTNQRGPVGLAIDYPE), and 1752–1796 (SKLY…MGDK). N-linked (GlcNAc...) asparagine glycans are attached at residues N1721, N1731, N1761, and N1823. Residues 1842–1883 (GSNPCSVNNGDCSQLCLPTSETSRSCMCTAGYSLKSGQQSCE) form the EGF-like 8 domain. 3 disulfide bridges follow: C1846/C1857, C1853/C1867, and C1869/C1882. The N-linked (GlcNAc...) asparagine glycan is linked to N1929. LDL-receptor class B repeat units lie at residues 1930–1972 (DTIY…DWIA), 1973–2015 (GNIY…HPEK), 2016–2059 (GYLF…DYED), and 2060–2103 (GKLY…FEDY). 2 N-linked (GlcNAc...) asparagine glycosylation sites follow: N1991 and N2044. N-linked (GlcNAc...) asparagine glycans are attached at residues N2113 and N2123. The EGF-like 9 domain maps to 2151-2191 (GTNVCAQNNGGCQQLCLFRGGGRRTCACAHGMLSEDGVSCR). Cystine bridges form between C2155–C2166, C2162–C2176, and C2178–C2190. 5 LDL-receptor class B repeats span residues 2247-2288 (NRIF…HRGW), 2289-2337 (DTLY…DECQ), 2338-2382 (NLMF…DHRA), 2383-2425 (EKIY…YGDY), and 2426-2467 (IFWT…VAND). A glycan (N-linked (GlcNAc...) asparagine) is linked at N2466. Positions 2472-2512 (ELSPCRVNNGGCQDLCLLTPKGHVNCSCRGERVLQEDFTCK) constitute an EGF-like 10 domain. Disulfide bonds link C2476–C2487, C2483–C2497, and C2499–C2511. An N-linked (GlcNAc...) asparagine glycan is attached at N2496. N2515 carries N-linked (GlcNAc...) asparagine glycosylation. 7 LDL-receptor class A domains span residues 2516-2557 (STCN…YCSS), 2558-2596 (RKCKKGFLHCMNGRCVASRFWCNGVDDCGDNSDEVPCNK), 2597-2635 (TSCAATEFRCRDGSCIGNSSRCNQFIDCEDASDEMNCTA), 2636-2684 (TDCS…NCPG), 2688-2730 (PKCP…RQDK), 2730-2769 (KFCYPVQFECNNHRCISKLWVCDGADDCGDGSDEDSRCRL), and 2770-2812 (TTCS…GCLY). Disulfide bonds link C2518–C2531, C2526–C2544, C2538–C2555, C2560–C2572, C2567–C2585, and C2579–C2594. Residue N2595 is glycosylated (N-linked (GlcNAc...) asparagine). Disulfide bonds link C2599-C2611, C2606-C2624, C2618-C2633, C2638-C2660, C2654-C2673, C2667-C2682, C2690-C2702, C2697-C2715, C2709-C2724, C2732-C2744, C2739-C2757, C2751-C2767, C2772-C2785, C2779-C2798, and C2792-C2810. Residues N2614 and N2632 are each glycosylated (N-linked (GlcNAc...) asparagine). The N-linked (GlcNAc...) asparagine glycan is linked to N2813. LDL-receptor class A domains follow at residues 2814 to 2853 (NTCDEREFMCGNRQCIPKHFVCDHDDDCGDGSDESPECEY), 2854 to 2897 (PTCG…RCSS), and 2900 to 2938 (SKCNDSFFMCKNGKCIPEALLCDNNNDCADGSDELNCFI). 15 disulfide bridges follow: C2816-C2828, C2823-C2841, C2835-C2851, C2856-C2868, C2863-C2882, C2876-C2895, C2902-C2914, C2909-C2927, C2921-C2936, C2941-C2953, C2949-C2962, C2964-C2977, C2983-C2993, C2989-C3002, and C3004-C3018. N2903 carries an N-linked (GlcNAc...) asparagine glycan. The 40-residue stretch at 2939 to 2978 (NECLNKKLSGCSQECEDLKIGYKCRCRPGFRLKDDGKTCI) folds into the EGF-like 11 domain. The 41-residue stretch at 2979–3019 (DIDECSTTYPCSQKCINTLGSYKCLCIEGYKLKPDNPTSCK) folds into the EGF-like 12; calcium-binding domain. 2 N-linked (GlcNAc...) asparagine glycosylation sites follow: N3045 and N3086. LDL-receptor class B repeat units lie at residues 3066-3110 (QMIY…DWVG), 3111-3153 (GNLY…DVQN), 3154-3197 (GYLY…DYIN), 3198-3240 (SRIY…FEDY), and 3241-3281 (IYWT…YHPY). N3176 carries N-linked (GlcNAc...) asparagine glycosylation. N-linked (GlcNAc...) asparagine glycosylation occurs at N3261. The EGF-like 13 domain occupies 3287-3328 (PNHPCKTNNAGCSNLCLLSPGGGHKCACPTNFYLGSDGKTCV). Cystine bridges form between C3291-C3302, C3298-C3312, and C3314-C3327. 11 LDL-receptor class A domains span residues 3329-3368 (SNCTASQFVCKNDKCIPFWWKCDTEDDCGDRSDEPEDCPE), 3369-3407 (FKCRPGQFQCSTGICTNPAFICDGDNDCQDNSDEANCDI), 3408-3447 (HVCLPSQFKCTNTNRCIPGIFRCNGQDNCGDGEDEKDCPE), 3448-3488 (VTCA…NCTQ), 3489-3530 (MTCG…ECDE), 3531-3569 (RTCEPYQFRCKNNRCVPGRWQCDYDNDCGDNSDEESCTP), 3570-3608 (RPCSESEFSCANGRCIAGRWKCDGDHDCADGSDEKDCIP), 3608-3646 (PRCEFDQYQCKNGHCIPMRWRCDADADCMDGTDEEDCGT), 3649-3689 (RTCP…ECLK), 3690-3730 (FQCP…DCES), and 3736-3776 (KSCS…SCSH). N3330 carries N-linked (GlcNAc...) asparagine glycosylation. Cystine bridges form between C3331–C3343, C3338–C3356, C3350–C3366, C3371–C3383, C3378–C3396, C3390–C3405, C3410–C3423, C3417–C3436, C3430–C3445, C3450–C3463, C3457–C3476, C3470–C3486, C3491–C3504, C3498–C3517, C3511–C3528, C3533–C3545, C3540–C3558, C3552–C3567, C3572–C3584, C3579–C3597, C3591–C3606, C3610–C3622, C3617–C3635, C3629–C3644, C3658–C3676, C3670–C3687, C3692–C3706, C3700–C3719, C3713–C3728, C3738–C3752, C3747–C3765, C3759–C3774, C3783–C3796, C3790–C3805, C3807–C3820, C3826–C3836, C3832–C3845, and C3847–C3858. An N-linked (GlcNAc...) asparagine glycan is attached at N3485. N3659 carries an N-linked (GlcNAc...) asparagine glycan. EGF-like domains are found at residues 3779 to 3821 (KSYD…NSCQ) and 3822 to 3859 (DVNECLRFGTCSQLCNNTKGSHVCSCAKNFMKTDNMCK). N3786 carries an N-linked (GlcNAc...) asparagine glycan. A glycan (N-linked (GlcNAc...) asparagine) is linked at N3837. 4 LDL-receptor class B repeats span residues 3910 to 3952 (NKIY…THLN), 3969 to 4011 (GNIY…DPLR), 4012 to 4055 (GTMY…DYHN), and 4056 to 4100 (ERLY…FEDY). Positions 3939–3942 (RNRR) match the Recognition site for proteolytical processing motif. N-linked (GlcNAc...) asparagine glycosylation occurs at N3952. 2 N-linked (GlcNAc...) asparagine glycosylation sites follow: N4074 and N4124. EGF-like domains lie at 4146–4182 (VTNPCDRKKCEWLCLLSPSGPVCTCPNGKRLDNGTCV), 4195–4231 (TTDTCDLVCLNGGSCFLNARKQAKCRCQPRYNGERCQ), 4231–4267 (QINQCSDYCQNGGLCTASPSGMPTCRCPTGFTGSRCD), 4267–4303 (DQQVCTNYCHNNGSCTVNQGNQPNCRCPPTFIGDRCQ), 4303–4339 (QYQQCFNYCENNGVCQMSRDGVKQCRCPPQFEGAQCQ), 4339–4374 (QDNKCSRCQEGKCNINRQSGDVSCICPDGKIAPSCL), and 4372–4409 (SCLTCDSYCLNGGTCSISDKTQLPECLCPLEVTGMRCE). Disulfide bonds link C4150–C4159, C4155–C4168, C4170–C4181, C4199–C4209, C4203–C4219, C4221–C4230, C4235–C4245, C4239–C4255, C4257–C4266, C4271–C4281, C4275–C4291, C4293–C4302, C4307–C4317, C4311–C4327, C4329–C4338, C4343–C4351, C4346–C4362, C4364–C4373, C4376–C4386, C4380–C4397, and C4399–C4408. Residue N4178 is glycosylated (N-linked (GlcNAc...) asparagine). Residue N4278 is glycosylated (N-linked (GlcNAc...) asparagine). A helical transmembrane segment spans residues 4420–4443 (RTASIVIPILLLLLLLAVVAFAWY). The Cytoplasmic segment spans residues 4444–4543 (KWRIKGAKGF…ADDDLTDPLA (100 aa)). Positions 4501 to 4506 (FTNPVY) match the NPXY motif motif. Residues 4522-4543 (STDEKRELLARGADDDLTDPLA) form a disordered region. Over residues 4523–4535 (TDEKRELLARGAD) the composition is skewed to basic and acidic residues.

The protein belongs to the LDLR family. In terms of assembly, binds vitellogenin and LRPAP1 (alpha 2-macroglobulin). Post-translationally, cleaved into a 85 kDa membrane-spanning subunit (LRP-85) and a 515 kDa large extracellular domain (LRP-515) that remains non-covalently associated. Somatic.

The protein localises to the membrane. It is found in the coated pit. Endocytic receptor involved in endocytosis and in phagocytosis of apoptotic cells. Involved in cellular lipid homeostasis. Involved in the plasma clearance of chylomicron remnants and activated LRPAP1 (alpha 2-macroglobulin), as well as the local metabolism of complexes between plasminogen activators and their endogenous inhibitors. Acts as an alpha-2-macroglobulin receptor. The sequence is that of Low-density lipoprotein receptor-related protein 1 (LRP1) from Gallus gallus (Chicken).